We begin with the raw amino-acid sequence, 502 residues long: Cytochrome P450 71A8 (502 aa).

The helical transmembrane segment at 16–36 (IISHTLAFQALVSLILLISIT) threads the bilayer. The tract at residues 93-119 (PVSSRRRPRGNHENSRSRLRRPRGSRS) is disordered. C447 contacts heme.

This sequence belongs to the cytochrome P450 family. Heme is required as a cofactor.

It is found in the membrane. The polypeptide is Cytochrome P450 71A8 (CYP71A8) (Mentha piperita (Peppermint)).